Reading from the N-terminus, the 513-residue chain is Bifunctional purine biosynthesis protein PurH (513 aa).

The region spanning 1 to 145 (MNKRAIISVY…KNFKYTTVIV (145 aa)) is the MGS-like domain.

It belongs to the PurH family.

The enzyme catalyses (6R)-10-formyltetrahydrofolate + 5-amino-1-(5-phospho-beta-D-ribosyl)imidazole-4-carboxamide = 5-formamido-1-(5-phospho-D-ribosyl)imidazole-4-carboxamide + (6S)-5,6,7,8-tetrahydrofolate. It carries out the reaction IMP + H2O = 5-formamido-1-(5-phospho-D-ribosyl)imidazole-4-carboxamide. The protein operates within purine metabolism; IMP biosynthesis via de novo pathway; 5-formamido-1-(5-phospho-D-ribosyl)imidazole-4-carboxamide from 5-amino-1-(5-phospho-D-ribosyl)imidazole-4-carboxamide (10-formyl THF route): step 1/1. It participates in purine metabolism; IMP biosynthesis via de novo pathway; IMP from 5-formamido-1-(5-phospho-D-ribosyl)imidazole-4-carboxamide: step 1/1. The sequence is that of Bifunctional purine biosynthesis protein PurH from Caldicellulosiruptor bescii (strain ATCC BAA-1888 / DSM 6725 / KCTC 15123 / Z-1320) (Anaerocellum thermophilum).